The chain runs to 98 residues: MTLFSSISSMSSSMTSSRSSIASFGSGTSMGSNSIACSVGSGSCGSGSGSGGCGDLTGGAKSSGGSCGGKGGSHNHGHGHGHGPHGHGGKGSGGSCSC.

Disordered stretches follow at residues 1-26 and 60-98; these read MTLF…SFGS and AKSS…SCSC. A compositionally biased stretch (gly residues) spans 60-72; it reads AKSSGGSCGGKGG. Residues 73-88 show a composition bias toward basic residues; the sequence is SHNHGHGHGHGPHGHG. The span at 89–98 shows a compositional bias: gly residues; it reads GKGSGGSCSC.

The protein belongs to the hssA/B family.

The protein is HssA/B-like protein 34 (hssl34) of Dictyostelium discoideum (Social amoeba).